A 329-amino-acid polypeptide reads, in one-letter code: Protein Brevis radix-like 4 (329 aa).

The tract at residues 12–37 (SGTSRHHGQQRRGGSPPPRGRTTSVY) is disordered. The region spanning 86–142 (REWVAQVEPGVQITFVSLAGGGGNDLKRIRFSREMYDKWQAQKWWGENNERIMELYN) is the BRX 1 domain. Residues 151-263 (LPTPPRSDDG…TTSCSSRDEV (113 aa)) are disordered. Composition is skewed to low complexity over residues 222–236 (SNPSERAWQQQQQPQ) and 243–252 (AAASDAMDAA). The segment covering 253-263 (RTTSCSSRDEV) has biased composition (polar residues). Residues 274 to 329 (TEWVIQDEPGVYITVRELADGTRELRRVRFSRERFAELNAKLWWEENKERIQAQYL) form the BRX 2 domain.

Belongs to the BRX family.

Its subcellular location is the nucleus. The chain is Protein Brevis radix-like 4 (BRXL4) from Oryza sativa subsp. japonica (Rice).